A 959-amino-acid polypeptide reads, in one-letter code: Alanine--tRNA ligase (959 aa).

Position 389 is a phosphoserine (Ser389). Residues His606, His610, Cys725, and His729 each coordinate Zn(2+).

Belongs to the class-II aminoacyl-tRNA synthetase family. Monomer. It depends on Zn(2+) as a cofactor.

It localises to the mitochondrion. Its subcellular location is the cytoplasm. It carries out the reaction tRNA(Ala) + L-alanine + ATP = L-alanyl-tRNA(Ala) + AMP + diphosphate. Functionally, catalyzes the attachment of alanine to tRNA(Ala) in a two-step reaction: alanine is first activated by ATP to form Ala-AMP and then transferred to the acceptor end of tRNA(Ala). Also edits incorrectly charged tRNA(Ala) via its editing domain. This Schizosaccharomyces pombe (strain 972 / ATCC 24843) (Fission yeast) protein is Alanine--tRNA ligase (ala1).